A 337-amino-acid chain; its full sequence is Beta-glucosidase-like protein NCA3, mitochondrial (337 aa).

The segment covering 57-67 has biased composition (low complexity); that stretch reads ESAATTTTLSS. The interval 57-84 is disordered; it reads ESAATTTTLSSSEKDTSEQKRDGGFQDG. Basic and acidic residues predominate over residues 68-80; that stretch reads SEKDTSEQKRDGG.

This sequence belongs to the SUN family.

The protein localises to the mitochondrion. In terms of biological role, involved in the mitochondrial expression of subunits 6 and 8 of the F0-F1 ATP synthase. In Saccharomyces cerevisiae (strain ATCC 204508 / S288c) (Baker's yeast), this protein is Beta-glucosidase-like protein NCA3, mitochondrial (NCA3).